The sequence spans 487 residues: MSELFIGGEWAAGTGPAFASRNPGTGAAVWEGNSASADDVDRAVRSARRAFAAWSASSVDERCAVVRRFAALVTERKEALAEAIGRETGKPLWEARTEAASMAAKVEISIQAYNERTGEKRSAMADGTAVLRHRPHGVVAVFGPYNFPGHLPNGHIVPALIAGNAVVFKPSELAPGVAALTVQIWRDAGLPAGVLNLVQGEKDTGIALANHRQIDGLFFTGSSDTGTLLHKQFGGRPEIVLALEMGGNNPLVIGPVADVDAAVHHTIQSAFLSAGQRCTCARRIFVPNDAAGDRFLERFTEVTSRITVGEYNADPQPFMGAVISVRAASRLVAAQERLLADGAKALLKMEQRDPKLGFVTPAILDVTNVANRPDEEHFGPLAQIIRYGSFNEALEQANDTEFGLSAGLLADDEALWAHFQRTIRAGIVNWNRPTNGASSGAPFGGPGRSGNHRPSAYYAADYCAFPMASVESAQLQMPASVSPGLQF.

221–226 (GSSDTG) contacts NAD(+). Active-site residues include Glu244 and Cys278.

Belongs to the aldehyde dehydrogenase family. AstD subfamily.

The enzyme catalyses N-succinyl-L-glutamate 5-semialdehyde + NAD(+) + H2O = N-succinyl-L-glutamate + NADH + 2 H(+). It functions in the pathway amino-acid degradation; L-arginine degradation via AST pathway; L-glutamate and succinate from L-arginine: step 4/5. In terms of biological role, catalyzes the NAD-dependent reduction of succinylglutamate semialdehyde into succinylglutamate. The sequence is that of N-succinylglutamate 5-semialdehyde dehydrogenase from Paraburkholderia xenovorans (strain LB400).